We begin with the raw amino-acid sequence, 276 residues long: Ribosomal RNA small subunit methyltransferase A (276 aa).

Residues asparagine 27, leucine 29, glycine 54, glutamate 75, aspartate 101, and asparagine 122 each coordinate S-adenosyl-L-methionine.

Belongs to the class I-like SAM-binding methyltransferase superfamily. rRNA adenine N(6)-methyltransferase family. RsmA subfamily.

Its subcellular location is the cytoplasm. The catalysed reaction is adenosine(1518)/adenosine(1519) in 16S rRNA + 4 S-adenosyl-L-methionine = N(6)-dimethyladenosine(1518)/N(6)-dimethyladenosine(1519) in 16S rRNA + 4 S-adenosyl-L-homocysteine + 4 H(+). Specifically dimethylates two adjacent adenosines (A1518 and A1519) in the loop of a conserved hairpin near the 3'-end of 16S rRNA in the 30S particle. May play a critical role in biogenesis of 30S subunits. In Brucella suis (strain ATCC 23445 / NCTC 10510), this protein is Ribosomal RNA small subunit methyltransferase A.